The following is a 296-amino-acid chain: Cation-efflux pump FieF (296 aa).

Residues 1–18 are Cytoplasmic-facing; sequence MTQTSQYDFWVKLASRAS. The chain crosses the membrane as a helical span at residues 19 to 32; it reads VATALTLITIKLLA. The Periplasmic portion of the chain corresponds to 33–43; sequence WLYSGSASMLA. The chain crosses the membrane as a helical span at residues 44–60; that stretch reads SLTDSFADTLASIINFI. Zn(2+) contacts are provided by Asp47, Asp51, Asp70, His73, and His77. At 61 to 83 the chain is on the cytoplasmic side; the sequence is AIRYAIVPADHDHRYGHGKAEPL. The helical transmembrane segment at 84-105 threads the bilayer; the sequence is AALAQSAFIMGSAFLLLFYGGE. At 106–119 the chain is on the periplasmic side; it reads RLLNPSPVENATLG. The helical transmembrane segment at 120-138 threads the bilayer; the sequence is VVVSVVAIVLTLALVLLQK. Topologically, residues 139 to 145 are cytoplasmic; that stretch reads RALAATN. Residues 146 to 160 form a helical membrane-spanning segment; that stretch reads STVVEADSLHYKSDL. Residues His155 and Asp159 each coordinate Zn(2+). The Periplasmic segment spans residues 161–180; that stretch reads FLNAAVLLALVLSQYGWWWA. The helical transmembrane segment at 181 to 200 threads the bilayer; sequence DGLFAVLIACYIGQQAFDLG. At 201–296 the chain is on the cytoplasmic side; that stretch reads YRSIQALLDR…DPVQVEPTTQ (96 aa). 6 residues coordinate Zn(2+): His234, Asp235, His250, His263, His285, and Asp287.

The protein belongs to the cation diffusion facilitator (CDF) transporter (TC 2.A.4) family. FieF subfamily. In terms of assembly, homodimer. The subunits are held together in a parallel orientation through zinc binding at the interface of the cytoplasmic domains.

The protein resides in the cell inner membrane. The catalysed reaction is Zn(2+)(in) + H(+)(out) = Zn(2+)(out) + H(+)(in). It carries out the reaction Cd(2+)(in) + H(+)(out) = Cd(2+)(out) + H(+)(in). It catalyses the reaction Fe(2+)(in) + H(+)(out) = Fe(2+)(out) + H(+)(in). Cytoplasmic zinc binding may trigger movements of two electrically repulsive cytoplasmic domains and reorient transmembrane helices, thereby modulating coordination geometry of the active site for zinc transport. It may modulate activity in response to cytoplasmic metal fluctuations. In terms of biological role, divalent metal cation transporter which exports Zn(2+), Cd(2+) and possibly Fe(2+). Zn(2+)/H(+) antiporter capable of using the proton motive force to remove Zn(2+) from the cytoplasm. May be involved in zinc and iron detoxification by efflux. The polypeptide is Cation-efflux pump FieF (Shewanella oneidensis (strain ATCC 700550 / JCM 31522 / CIP 106686 / LMG 19005 / NCIMB 14063 / MR-1)).